The chain runs to 4998 residues: SCO-spondin (4998 aa).

A signal peptide spans 1–17; it reads MLPLALLFGMLWTQANG. Positions 18-102 constitute an EMI domain; it reads HWCEQIETVH…ACCPGWGGAH (85 aa). The VWFD 1 domain maps to 72-241; that stretch reads GLCAIYKPPE…KLPGSEPGCL (170 aa). 2 disulfides stabilise this stretch: C74–C202 and C103–C240. N-linked (GlcNAc...) asparagine glycosylation is found at N88 and N130. Residues 349-404 enclose the TIL 1 domain; that stretch reads CPGGQLYSDCVSSCPPSCSAVAQGEEGSCGKECVSGCECPTGLFWDGALCVPAAHC. The VWFC 1 domain occupies 404–496; sequence CPCYHRRQRY…HGACDTGSCL (93 aa). A VWFD 2 domain is found at 442–615; the sequence is AECAVGGDGH…FQVSGDGRCP (174 aa). 2 disulfides stabilise this stretch: C444–C577 and C468–C614. 2 N-linked (GlcNAc...) asparagine glycosylation sites follow: N534 and N698. The TIL 2 domain occupies 706-759; sequence CPGGQVYQECAPVCGHHCGEPEDCKELGICVAGCNCPPGLLWDLEGQCVPPSMC. N-linked (GlcNAc...) asparagine glycosylation is found at N771, N790, N824, and N866. In terms of domain architecture, VWFD 3 spans 892 to 1062; it reads GWCQASGAPH…HSWRLNPLCP (171 aa). Cystine bridges form between C894/C1026, C916/C1061, and C937/C944. The TIL 3 domain maps to 1153-1209; sequence CEGGQVYEPCGSTCPPTCHDHHSELRWHCQVITCVEGCFCPEGTLLHGGACMKLAAC. N-linked (GlcNAc...) asparagine glycosylation is present at N1230. LDL-receptor class A domains lie at 1253–1290, 1293–1328, 1329–1365, and 1369–1407; these read GCAE…EGCA, VCGE…EQGC, LCPH…ESCL, and SCIS…SHCS. 12 disulfides stabilise this stretch: C1254/C1267, C1261/C1280, C1274/C1289, C1294/C1306, C1301/C1319, C1313/C1328, C1330/C1342, C1337/C1355, C1349/C1364, C1370/C1382, C1377/C1395, and C1389/C1406. A disordered region spans residues 1406 to 1440; that stretch reads CSLPSLPTPPGGIGQNPSTSSLDTAPSPVGSTSPA. Over residues 1420–1440 the composition is skewed to polar residues; the sequence is QNPSTSSLDTAPSPVGSTSPA. LDL-receptor class A domains are found at residues 1442–1478 and 1480–1519; these read PCSL…LDCG and PCML…DVCE. 6 disulfides stabilise this stretch: C1443-C1455, C1450-C1468, C1462-C1477, C1481-C1494, C1488-C1507, and C1501-C1518. The N-linked (GlcNAc...) asparagine glycan is linked to N1528. The 39-residue stretch at 1533-1571 folds into the LDL-receptor class A 7 domain; that stretch reads PCPEFSCPDGTCIDFLLVCDGNPDCELADETEPSLDEQG. Intrachain disulfides connect C1534/C1544, C1539/C1557, C1551/C1572, C1584/C1620, C1588/C1625, C1599/C1610, C1640/C1680, C1644/C1685, and C1654/C1664. 2 TSP type-1 domains span residues 1572–1626 and 1628–1686; these read CGAW…EACP and DGEW…EGCL. N-linked (GlcNAc...) asparagine glycosylation occurs at N1598. N1687 carries an N-linked (GlcNAc...) asparagine glycan. Positions 1692–1746 constitute a TIL 4 domain; it reads GELVFRTCAPCPLTCDDISGQAACPPDRPCSSPGCWCPDGKVLNTEGQCVRPRQC. 2 EGF-like domains span residues 1702-1741 and 1742-1768; these read CPLT…GQCV and RPRQ…CQLC. The region spanning 1771-1827 is the TSP type-1 3 domain; that stretch reads DCGWSSWSPWAECLGPCSSQSLQWSFRSPNNPRLSGHGRQCRGIHRKARRCQTEACE. Disulfide bonds link C1772/C1811, C1783/C1787, and C1821/C1826. Positions 1827–1887 constitute a VWFC 2 domain; sequence EGCEQWGLMY…GMGESCCHCA (61 aa). Residues N1892 and N1989 are each glycosylated (N-linked (GlcNAc...) asparagine). An F5/8 type C domain is found at 1929 to 2085; it reads CYSPLGLAGL…IFLWVELLGL (157 aa). Residues 2091–2127 form the LDL-receptor class A 8 domain; the sequence is LCPGSRHRCASGECAPKGGPCDGAVDCDDGSDEEGCG. Disulfide bonds link C2092-C2104, C2099-C2117, and C2111-C2126. A disordered region spans residues 2119-2209; sequence DGSDEEGCGS…TFPPGAKSLH (91 aa). Polar residues predominate over residues 2130 to 2144; the sequence is HASTTSRTPALSPTQ. Residues 2148–2158 show a composition bias toward basic and acidic residues; that stretch reads FPREVSEDLRQ. Composition is skewed to polar residues over residues 2164-2173 and 2190-2201; these read TSHSPPSSGE and QPMQTLSATSTF. LDL-receptor class A domains follow at residues 2242 to 2278 and 2299 to 2335; these read PCGP…QHCA and LCSP…DNCV. Cystine bridges form between C2243/C2255, C2250/C2268, C2262/C2277, C2300/C2312, C2307/C2325, C2319/C2334, C2337/C2373, C2348/C2352, C2383/C2388, C2403/C2440, C2407/C2445, and C2418/C2430. TSP type-1 domains are found at residues 2336–2389 and 2391–2446; these read DCVL…QACP and AGAW…QLCP. A TIL 5 domain is found at 2468–2511; the sequence is VPPCPPSCLDPEANRSCSGHCMEGCRCPPGLLLQDSHCLPLSEC. N2481 and N2530 each carry an N-linked (GlcNAc...) asparagine glycan. 3 consecutive TSP type-1 domains span residues 2551–2605, 2609–2664, and 2666–2719; these read SCGW…TDCG, PGWT…PVCP, and PSAW…HPCT. 9 disulfide bridges follow: C2552/C2590, C2563/C2567, C2600/C2604, C2620/C2658, C2624/C2663, C2640/C2648, C2678/C2713, C2682/C2718, and C2693/C2703. Residues N2772 and N2802 are each glycosylated (N-linked (GlcNAc...) asparagine). 2 TSP type-1 domains span residues 2820–2875 and 2876–2919; these read ACGW…RPCR and GPGA…QPCA. Disulfide bonds link C2821-C2859, C2832-C2836, and C2869-C2874. 4 N-linked (GlcNAc...) asparagine glycosylation sites follow: N2897, N2952, N2999, and N3009. Residues 2926–2978 form the TIL 6 domain; it reads CPEDQQWLDCAQGPASCAHLSIPGEANQTCHPGCYCLSGMLLLNNVCVPVQDC. 2 consecutive TSP type-1 domains span residues 3019–3086 and 3088–3143; these read QPAW…PGCN and AGGW…QPCP. 6 cysteine pairs are disulfide-bonded: C3031/C3080, C3035/C3085, C3046/C3070, C3100/C3137, C3104/C3142, and C3115/C3127. N3146 carries an N-linked (GlcNAc...) asparagine glycan. The TIL 7 domain occupies 3151–3201; it reads EGAEYSPCGPPCPRSCDDLVHCVWRCQPGCYCPLGKVLSADGAICVKPSYC. A glycan (N-linked (GlcNAc...) asparagine) is linked at N3235. TSP type-1 domains follow at residues 3244–3306 and 3308–3363; these read SGDW…TACP and DGAW…TLCT. 6 disulfide bridges follow: C3256/C3299, C3260/C3305, C3271/C3283, C3320/C3355, C3323/C3362, and C3333/C3345. N3301 carries an N-linked (GlcNAc...) asparagine glycan. A glycan (N-linked (GlcNAc...) asparagine) is linked at N3357. A TIL 8 domain is found at 3365 to 3421; the sequence is CGGGQDLLPCGQPCPHSCQDLSLGSTCQPGSAGCQSGCGCPPGQLSQDGLCVFPVDC. N-linked (GlcNAc...) asparagine glycosylation is found at N3435 and N3462. Positions 3481–3529 constitute a TSP type-1 15 domain; that stretch reads PGIWSSWGPWEKCSVSCGGGEQLRSRQCARPPCPGLAQQSRICHIHVCR. 3 disulfide bridges follow: C3493–C3523, C3497–C3528, and C3508–C3513. N-linked (GlcNAc...) asparagine glycosylation is present at N3638. TSP type-1 domains lie at 3657–3713, 3727–3779, 3793–3849, and 3851–3906; these read HGSF…PECP, AGGW…PSCA, NCFW…RACP, and PGGW…MPCE. Disulfide bonds link C3669/C3707, C3673/C3712, and C3685/C3697. Residue N3761 is glycosylated (N-linked (GlcNAc...) asparagine). Intrachain disulfides connect C3794–C3830, C3805–C3809, C3843–C3848, C3863–C3900, C3867–C3905, and C3878–C3890. One can recognise a TIL 9 domain in the interval 3909-3964; sequence CPAGMEMVSCANHCPYSCSDLQEGGMCQEDQACQLGCRCSEGFLEQDGGCVPVGHC. Residue N3986 is glycosylated (N-linked (GlcNAc...) asparagine). 4 TSP type-1 domains span residues 4006-4059, 4100-4155, 4157-4213, and 4215-4269; these read HCAW…VPCP, PRGW…QLCL, KLER…GPCQ, and DCTW…GNCS. 12 disulfides stabilise this stretch: C4007/C4043, C4018/C4022, C4053/C4058, C4112/C4149, C4116/C4154, C4127/C4139, C4169/C4207, C4173/C4212, C4184/C4195, C4216/C4253, C4227/C4229, and C4263/C4268. An N-linked (GlcNAc...) asparagine glycan is attached at N4196. An N-linked (GlcNAc...) asparagine glycan is attached at N4267. The TIL 10 domain maps to 4273–4328; that stretch reads CPPPFEFQSCGSPCAGLCATHLNHRLCQDLPPCQPGCYCPKGLLEQAGSCILPEQC. N-linked (GlcNAc...) asparagine glycans are attached at residues N4408 and N4463. A TSP type-1 24 domain is found at 4465–4516; the sequence is TCQWGPWGPWSPCQMPCSGGFKLRWRVARDTSAGECPGPWAQTESCNMGSCP. 3 disulfides stabilise this stretch: C4466-C4500, C4477-C4481, and C4510-C4515. The TIL 11 domain maps to 4530–4576; sequence DCANQCPRSCADLWDGVQCLQGPCSPGCRCPPGQLVQDGHCVPISSC. N4584, N4601, and N4606 each carry an N-linked (GlcNAc...) asparagine glycan. One can recognise a TSP type-1 25 domain in the interval 4616–4669; sequence CPVLGPWSAWSECSAVCGKGTMVRHRSCEEHPDREPCQALDLQQWQECNLQACP. Intrachain disulfides connect C4628–C4663, C4632–C4668, and C4643–C4652. The TIL 12 domain maps to 4671–4725; sequence CPPGQVLSTCATMCPSLCSHLWPGTICVREPCQLGCGCPGGQLLYNGTCIPPEAC. 4 N-linked (GlcNAc...) asparagine glycosylation sites follow: N4716, N4756, N4799, and N4806. The TIL 13 domain occupies 4777–4835; that stretch reads CAPGEIWQHGKLGPCEKTCPEMNMTQAWSNCTEAQAPGCVCQLGYFRSQTGLCVPEDHC. Positions 4835 to 4893 constitute a VWFC 3 domain; it reads CECWHHGSPHLPGSEWQEACESCRCLHGKSVCIRHCPELSCAQGEVIMQEPGSCCPICQ. 4 disulfide bridges follow: C4892–C4952, C4918–C4969, C4928–C4985, and C4932–C4987. Residues 4892–4991 enclose the CTCK domain; sequence CQQDTLKEEP…IHSCQCSACQ (100 aa). N4912 is a glycosylation site (N-linked (GlcNAc...) asparagine).

The protein belongs to the thrombospondin family. In terms of tissue distribution, subcommissural organ.

The protein resides in the secreted. It is found in the extracellular space. Involved in the modulation of neuronal aggregation. May be involved in developmental events during the formation of the central nervous system. This is SCO-spondin from Mus musculus (Mouse).